A 371-amino-acid polypeptide reads, in one-letter code: DNA replication and repair protein RecF (371 aa).

30-37 is an ATP binding site; it reads GKNGQGKT.

Belongs to the RecF family.

The protein localises to the cytoplasm. Its function is as follows. The RecF protein is involved in DNA metabolism; it is required for DNA replication and normal SOS inducibility. RecF binds preferentially to single-stranded, linear DNA. It also seems to bind ATP. The protein is DNA replication and repair protein RecF of Clostridioides difficile (strain 630) (Peptoclostridium difficile).